We begin with the raw amino-acid sequence, 265 residues long: Eukaryotic translation initiation factor 3 subunit J (265 aa).

Residues 24-34 (AGDEPILDSWD) are compositionally biased toward acidic residues. A disordered region spans residues 24-74 (AGDEPILDSWDEEPKAKKEAAKPKPKPKAGGKKNAKGEEKKEQVLAIDELD). Over residues 35 to 45 (EEPKAKKEAAK) the composition is skewed to basic and acidic residues. A compositionally biased stretch (basic residues) spans 46-57 (PKPKPKAGGKKN). Coiled-coil stretches lie at residues 78-106 (RKEL…MAEE) and 190-220 (IENI…ARVK).

This sequence belongs to the eIF-3 subunit J family. Component of the eukaryotic translation initiation factor 3 (eIF-3) complex.

The protein localises to the cytoplasm. In terms of biological role, component of the eukaryotic translation initiation factor 3 (eIF-3) complex, which is involved in protein synthesis of a specialized repertoire of mRNAs and, together with other initiation factors, stimulates binding of mRNA and methionyl-tRNAi to the 40S ribosome. The eIF-3 complex specifically targets and initiates translation of a subset of mRNAs involved in cell proliferation. This chain is Eukaryotic translation initiation factor 3 subunit J, found in Candida glabrata (strain ATCC 2001 / BCRC 20586 / JCM 3761 / NBRC 0622 / NRRL Y-65 / CBS 138) (Yeast).